A 455-amino-acid chain; its full sequence is L-serine dehydratase (455 aa).

This sequence belongs to the iron-sulfur dependent L-serine dehydratase family. It depends on [4Fe-4S] cluster as a cofactor.

It carries out the reaction L-serine = pyruvate + NH4(+). It participates in carbohydrate biosynthesis; gluconeogenesis. The polypeptide is L-serine dehydratase (sdaA) (Helicobacter pylori (strain ATCC 700392 / 26695) (Campylobacter pylori)).